The sequence spans 850 residues: Protein translocase subunit SecA 2 (850 aa).

ATP-binding positions include glutamine 83, 101 to 105 (GEGKT), and aspartate 491.

This sequence belongs to the SecA family. Monomer and homodimer. Part of the essential Sec protein translocation apparatus which comprises SecA, SecYEG and auxiliary proteins SecDF. Other proteins may also be involved.

It is found in the cell membrane. It localises to the cytoplasm. It catalyses the reaction ATP + H2O + cellular proteinSide 1 = ADP + phosphate + cellular proteinSide 2.. Functionally, part of the Sec protein translocase complex. Interacts with the SecYEG preprotein conducting channel. Has a central role in coupling the hydrolysis of ATP to the transfer of proteins into and across the cell membrane, serving as an ATP-driven molecular motor driving the stepwise translocation of polypeptide chains across the membrane. This is Protein translocase subunit SecA 2 from Mycolicibacterium vanbaalenii (strain DSM 7251 / JCM 13017 / BCRC 16820 / KCTC 9966 / NRRL B-24157 / PYR-1) (Mycobacterium vanbaalenii).